Here is a 141-residue protein sequence, read N- to C-terminus: Large ribosomal subunit protein uL16 (141 aa).

Residues 1 to 17 (MLQPKRTKYRKVQKGRM) are compositionally biased toward basic residues. The interval 1–29 (MLQPKRTKYRKVQKGRMKGNSQRGHELSN) is disordered.

It belongs to the universal ribosomal protein uL16 family. Part of the 50S ribosomal subunit.

Binds 23S rRNA and is also seen to make contacts with the A and possibly P site tRNAs. This chain is Large ribosomal subunit protein uL16, found in Flavobacterium johnsoniae (strain ATCC 17061 / DSM 2064 / JCM 8514 / BCRC 14874 / CCUG 350202 / NBRC 14942 / NCIMB 11054 / UW101) (Cytophaga johnsonae).